A 61-amino-acid polypeptide reads, in one-letter code: Small ribosomal subunit protein uS14 (61 aa).

Residues cysteine 24, cysteine 27, cysteine 40, and cysteine 43 each coordinate Zn(2+).

Belongs to the universal ribosomal protein uS14 family. Zinc-binding uS14 subfamily. Part of the 30S ribosomal subunit. Contacts proteins S3 and S10. Zn(2+) serves as cofactor.

Functionally, binds 16S rRNA, required for the assembly of 30S particles and may also be responsible for determining the conformation of the 16S rRNA at the A site. In Desulfovibrio desulfuricans (strain ATCC 27774 / DSM 6949 / MB), this protein is Small ribosomal subunit protein uS14.